The sequence spans 331 residues: Myc-associated zinc finger protein (331 aa).

2 disordered regions span residues 46–65 (AQSPFQAAPAPPPTPQAPAA) and 108–131 (TVDTAALKQPPAPPPPPPAVSAPA). The span at 117–127 (PPAPPPPPPAV) shows a compositional bias: pro residues. 4 C2H2-type zinc fingers span residues 177–199 (YICALCAKEFKNGYNLRRHEAIH), 266–288 (HACEMCGKAFRDVYHLNRHKLSH), 294–316 (YQCPVCQQRFKRKDRMSYHVRSH), and 324–331 (YNCSHCGK).

As to quaternary structure, interacts with BPTF. Ubiquitously expressed.

The protein resides in the nucleus. Functionally, transcriptional regulator. Acts as a transcriptional activator that binds to purine-rich GAGA sites found in the promoter of many genes including insulin I and II and islet amyloid polypeptide. The protein is Myc-associated zinc finger protein (MAZ) of Mesocricetus auratus (Golden hamster).